Here is a 485-residue protein sequence, read N- to C-terminus: MNSVLALIAGAILPLAFAPFNWFPIAFVSPAILLAVWLRSRPLVAWWRGWLFGFGFFGAGASWVYVSIHHFGNANVPLAVLITVLFVFVLALFIAFQGLSFSLFFRKRKAALTALFAFPAWWVVWEWLRSILFTGFPWLFLGYSQINSPLKGFGPLFGIYGISLIVAFISGCIYLLVTSKKLNKKIMCLILIILPFIVGWVLTFIPWTRPGSESVRVGLVQGNIGQRLKWDPDTLYSTLHTYYSETQKNWDHGIIVWPEAAIPIYPQQVSVFLQALDKEAKQHNTALMTGIPIYHEKTNKVFNGLMVLGDGHGLYLKRHLVPFGESFTSSKICNLLMKYFDIPMSDLSPGPEDQEPTVVKGIPFAPFICYEIAYPTEVLNHLSNKQFIVVVNDDSWFAGTIAPAQQLQIAQMRALETERYLLYSTNTGITAIISPEGKIVKSAPQNQRLLLTGQIKPVTGKTPLMRWNYYPVVGIIIIFLLLTFL.

6 helical membrane-spanning segments follow: residues 8-28 (IAGAILPLAFAPFNWFPIAFV), 49-69 (GWLFGFGFFGAGASWVYVSIH), 76-96 (VPLAVLITVLFVFVLALFIAF), 121-141 (WWVVWEWLRSILFTGFPWLFL), 157-177 (FGIYGISLIVAFISGCIYLLV), and 186-206 (IMCLILIILPFIVGWVLTFIP). The CN hydrolase domain occupies 220–457 (VQGNIGQRLK…RLLLTGQIKP (238 aa)). Glu-259 acts as the Proton acceptor in catalysis. The active site involves Lys-317. Cys-369 functions as the Nucleophile in the catalytic mechanism. A helical transmembrane segment spans residues 464 to 484 (LMRWNYYPVVGIIIIFLLLTF).

This sequence belongs to the CN hydrolase family. Apolipoprotein N-acyltransferase subfamily.

The protein resides in the cell inner membrane. The catalysed reaction is N-terminal S-1,2-diacyl-sn-glyceryl-L-cysteinyl-[lipoprotein] + a glycerophospholipid = N-acyl-S-1,2-diacyl-sn-glyceryl-L-cysteinyl-[lipoprotein] + a 2-acyl-sn-glycero-3-phospholipid + H(+). Its pathway is protein modification; lipoprotein biosynthesis (N-acyl transfer). Its function is as follows. Catalyzes the phospholipid dependent N-acylation of the N-terminal cysteine of apolipoprotein, the last step in lipoprotein maturation. This is Apolipoprotein N-acyltransferase from Coxiella burnetii (strain RSA 493 / Nine Mile phase I).